Reading from the N-terminus, the 895-residue chain is DNA mismatch repair protein MutS (895 aa).

632–639 (GPNMAGKS) contributes to the ATP binding site. Residues 824 to 849 (VTQDKKQVKKQTKNNHSARSGSRQQQ) form a disordered region. Over residues 837-849 (NNHSARSGSRQQQ) the composition is skewed to polar residues.

Belongs to the DNA mismatch repair MutS family.

In terms of biological role, this protein is involved in the repair of mismatches in DNA. It is possible that it carries out the mismatch recognition step. This protein has a weak ATPase activity. This chain is DNA mismatch repair protein MutS, found in Desulforapulum autotrophicum (strain ATCC 43914 / DSM 3382 / VKM B-1955 / HRM2) (Desulfobacterium autotrophicum).